Consider the following 143-residue polypeptide: Small ribosomal subunit protein uS12 (143 aa).

A Hydroxyproline modification is found at Pro62.

This sequence belongs to the universal ribosomal protein uS12 family. As to quaternary structure, component of the 40S small ribosomal subunit.

It is found in the cytoplasm. The protein localises to the cytosol. The protein resides in the rough endoplasmic reticulum. This chain is Small ribosomal subunit protein uS12 (RPS23), found in Ciona intestinalis (Transparent sea squirt).